We begin with the raw amino-acid sequence, 474 residues long: L-arabinose isomerase 2 (474 aa).

4 residues coordinate Mn(2+): glutamate 306, glutamate 331, histidine 348, and histidine 447.

The protein belongs to the arabinose isomerase family. Requires Mn(2+) as cofactor.

The enzyme catalyses beta-L-arabinopyranose = L-ribulose. It functions in the pathway carbohydrate degradation; L-arabinose degradation via L-ribulose; D-xylulose 5-phosphate from L-arabinose (bacterial route): step 1/3. Its function is as follows. Catalyzes the conversion of L-arabinose to L-ribulose. This Bacillus licheniformis (strain ATCC 14580 / DSM 13 / JCM 2505 / CCUG 7422 / NBRC 12200 / NCIMB 9375 / NCTC 10341 / NRRL NRS-1264 / Gibson 46) protein is L-arabinose isomerase 2.